We begin with the raw amino-acid sequence, 193 residues long: Ion-translocating oxidoreductase complex subunit A (193 aa).

Transmembrane regions (helical) follow at residues 5–25 (FLLF…FLGL), 39–59 (IGMG…SWLV), 62–82 (FILL…LVIA), 102–122 (LLGI…VALL), 134–154 (AIYG…FAAI), and 171–191 (SIGL…SGLV).

It belongs to the NqrDE/RnfAE family. As to quaternary structure, the complex is composed of six subunits: RnfA, RnfB, RnfC, RnfD, RnfE and RnfG.

The protein localises to the cell inner membrane. Its function is as follows. Part of a membrane-bound complex that couples electron transfer with translocation of ions across the membrane. This Photorhabdus laumondii subsp. laumondii (strain DSM 15139 / CIP 105565 / TT01) (Photorhabdus luminescens subsp. laumondii) protein is Ion-translocating oxidoreductase complex subunit A.